The primary structure comprises 299 residues: Oxygen-dependent coproporphyrinogen-III oxidase (299 aa).

S92 lines the substrate pocket. 2 residues coordinate a divalent metal cation: H96 and H106. The active-site Proton donor is H106. 108–110 (NVR) contributes to the substrate binding site. Residues H145 and H175 each coordinate a divalent metal cation. The segment at 240–275 (YVEFNLVWDRGTLFGLQTGGRTESILMSMPPLVRWE) is important for dimerization. 258-260 (GGR) contributes to the substrate binding site.

This sequence belongs to the aerobic coproporphyrinogen-III oxidase family. Homodimer. The cofactor is a divalent metal cation.

Its subcellular location is the cytoplasm. It carries out the reaction coproporphyrinogen III + O2 + 2 H(+) = protoporphyrinogen IX + 2 CO2 + 2 H2O. Its pathway is porphyrin-containing compound metabolism; protoporphyrin-IX biosynthesis; protoporphyrinogen-IX from coproporphyrinogen-III (O2 route): step 1/1. Involved in the heme biosynthesis. Catalyzes the aerobic oxidative decarboxylation of propionate groups of rings A and B of coproporphyrinogen-III to yield the vinyl groups in protoporphyrinogen-IX. The chain is Oxygen-dependent coproporphyrinogen-III oxidase from Klebsiella pneumoniae (strain 342).